Reading from the N-terminus, the 309-residue chain is MIIVTGGAGMIGSNIIKALNDTGYRDILVVDNLKDGTKFANLVDLDIADYIDKEDFIANIIAGDDLGEIDAIFHEGACSSTTEWDGKYMMDNNYQYSKDLLHYCLDREIPFLYASSAATYGGREEFIEERQFEAPLNVYGYSKFLFDQYVREILPEAESQICGFRYFNVYGPREGHKGSMASVAFHLNGQINRGENPKLFDGSQDFKRDFIYVGDVAAVNLWFLKSGVSGIFNCGTGRAETFQAVADAVVDFHQKGAVENIPFPEKLKGRYQAFTQADLTKLRAAGYDAPFKTVAEGVKEYMAWLNRTA.

NADP(+)-binding positions include 10–11, 31–32, Lys-38, Lys-53, 75–79, and Asn-92; these read MI, DN, and EGACS. The Proton acceptor role is filled by Tyr-139. Lys-143 contributes to the NADP(+) binding site. Asn-168 contacts substrate. 2 residues coordinate NADP(+): Val-169 and Lys-177. The active-site Proton acceptor is Lys-177. Substrate is bound by residues Ser-179, His-186, 200 to 203, Arg-208, and Tyr-271; that span reads FDGS.

The protein belongs to the NAD(P)-dependent epimerase/dehydratase family. HldD subfamily. As to quaternary structure, homopentamer. NADP(+) serves as cofactor.

The enzyme catalyses ADP-D-glycero-beta-D-manno-heptose = ADP-L-glycero-beta-D-manno-heptose. Its pathway is nucleotide-sugar biosynthesis; ADP-L-glycero-beta-D-manno-heptose biosynthesis; ADP-L-glycero-beta-D-manno-heptose from D-glycero-beta-D-manno-heptose 7-phosphate: step 4/4. Its function is as follows. Catalyzes the interconversion between ADP-D-glycero-beta-D-manno-heptose and ADP-L-glycero-beta-D-manno-heptose via an epimerization at carbon 6 of the heptose. This Serratia proteamaculans (strain 568) protein is ADP-L-glycero-D-manno-heptose-6-epimerase.